The primary structure comprises 523 residues: Cytochrome P450 monooxygenase ple1 (523 aa).

A helical transmembrane segment spans residues 9-29; the sequence is ALPVLAIWAAIGLAYWIDSQK. A glycan (N-linked (GlcNAc...) asparagine) is linked at asparagine 141. Cysteine 444 is a binding site for heme.

This sequence belongs to the cytochrome P450 family. Heme is required as a cofactor.

Its subcellular location is the membrane. The protein operates within secondary metabolite biosynthesis; terpenoid biosynthesis. In terms of biological role, cytochrome P450 monooxygenase; part of the gene cluster that mediates the biosynthesis of pleuromutilin, a tricyclic diterpene showing antibacterial properties. The geranylgeranyl diphosphate (GGPP) synthase ple4 catalyzes the first step in pleuromutilin biosynthesis. GGPP is then substrate of the premutilin synthase (PS) ple3 to yield premutilin. Premutilin synthase is a bifunctional enzyme composed of the fusion of a class II diterpene cyclase (DTC) and a class I diterpene synthase (DTS), with the corresponding domains and active sites containing characteristic aspartate-rich motifs. GGPP is first converted to mutildienyl-diphosphate (MPP) at the class II DTC site. MPP is subsequently further cyclized at the class I DTS site, followed by a 1,5-hydride shift and addition of water prior to terminating deprotonation, to yield premutilin. The cytochrome P450 monooxygenases ple5 and ple6 hydroxylate premutilin at C-11 and C-3, respectively, producing 11-hydroxypremutilin and 3-hydroxypremutilin. The combination of the actions of both ple5 and ple6 leads to the production of 3,11-dihydroxypremutilin. The short chain dehydrogenase ple7 further converts 3,11-dihydroxypremutilin into mutilin. The acetyltransferase ple2 then acetylates mutilin to produce 14-O-acetylmutilin. Finally, the cytochrome P450 monooxygenase ple1 catalyzes hydroxylation on the alpha position of the acetyl side chain of 14-O-acetylmutilin to yield pleuromutilin. The chain is Cytochrome P450 monooxygenase ple1 from Rhodocybe pseudopiperita (Clitopilus pseudopiperitus).